Here is a 470-residue protein sequence, read N- to C-terminus: Glutamate--tRNA ligase 2 (470 aa).

Positions 10–20 (PSPTGFLHIGS) match the 'HIGH' region motif. Positions 239–243 (KLSKR) match the 'KMSKS' region motif. Lysine 242 contacts ATP.

The protein belongs to the class-I aminoacyl-tRNA synthetase family. Glutamate--tRNA ligase type 1 subfamily. Monomer.

The protein resides in the cytoplasm. The enzyme catalyses tRNA(Glu) + L-glutamate + ATP = L-glutamyl-tRNA(Glu) + AMP + diphosphate. Functionally, catalyzes the attachment of glutamate to tRNA(Glu) in a two-step reaction: glutamate is first activated by ATP to form Glu-AMP and then transferred to the acceptor end of tRNA(Glu). The protein is Glutamate--tRNA ligase 2 of Rickettsia prowazekii (strain Madrid E).